Here is a 250-residue protein sequence, read N- to C-terminus: Glucosamine-6-phosphate deaminase (250 aa).

Residue Asp-67 is the Proton acceptor; for enolization step of the active site. The For ring-opening step role is filled by Asn-136. His-138 (proton acceptor; for ring-opening step) is an active-site residue. Glu-143 (for ring-opening step) is an active-site residue.

This sequence belongs to the glucosamine/galactosamine-6-phosphate isomerase family. NagB subfamily.

It catalyses the reaction alpha-D-glucosamine 6-phosphate + H2O = beta-D-fructose 6-phosphate + NH4(+). Its pathway is amino-sugar metabolism; N-acetylneuraminate degradation; D-fructose 6-phosphate from N-acetylneuraminate: step 5/5. Functionally, catalyzes the reversible isomerization-deamination of glucosamine 6-phosphate (GlcN6P) to form fructose 6-phosphate (Fru6P) and ammonium ion. In Oceanobacillus iheyensis (strain DSM 14371 / CIP 107618 / JCM 11309 / KCTC 3954 / HTE831), this protein is Glucosamine-6-phosphate deaminase.